A 727-amino-acid chain; its full sequence is ABC transporter G family member STR2 (727 aa).

At 1-475 the chain is on the cytoplasmic side; that stretch reads MKTQGLELET…NFTNIRRTPE (475 aa). In terms of domain architecture, ABC transporter spans 25–275; sequence LEFESLTYTV…LNRMGRKIPK (251 aa). Residue 69-76 participates in ATP binding; the sequence is GPSGAGKS. The helical transmembrane segment at 476–496 threads the bilayer; the sequence is LFLSRLMVLTFMGVMMATMFH. The Extracellular segment spans residues 497–510; sequence NPKNTLQGITNRLS. Residues 511–531 form a helical membrane-spanning segment; the sequence is FFIFTVCLFFFSSNDAVPAFI. Over 532-559 the chain is Cytoplasmic; sequence QERFIFIRETSHNAYRASCYTIASLITH. A helical transmembrane segment spans residues 560-580; sequence MPFLALQALAYAAIVWFALEL. The Extracellular segment spans residues 581-583; it reads RGP. The chain crosses the membrane as a helical span at residues 584–604; that stretch reads FIYFFLVLFISLLSTNSFVVF. At 605-612 the chain is on the cytoplasmic side; sequence VSSIVPNY. The chain crosses the membrane as a helical span at residues 613 to 633; it reads ILGYAAVIAFTALFFLFCGYF. The Extracellular segment spans residues 634–699; the sequence is LSSEDIPLYW…GTEEIKKRNN (66 aa). Asparagine 667 is a glycosylation site (N-linked (GlcNAc...) asparagine). The helical transmembrane segment at 700–720 threads the bilayer; sequence VLIMLGWAVLYRILFYIILRF. Over 721–727 the chain is Cytoplasmic; it reads ASKNQRS.

This sequence belongs to the ABC transporter superfamily. ABCG family. Stunted arbuscule (STR) subfamily. As to quaternary structure, heterodimerizes with STR; the resulting transporter is located in the peri-arbuscular membrane. As to expression, expressed constitutively in the vascular tissue of roots.

It is found in the cell membrane. Together with STR, required for arbuscule development in arbuscular mycorrhizal symbiosis. In Medicago truncatula (Barrel medic), this protein is ABC transporter G family member STR2.